The primary structure comprises 518 residues: Glutamate--cysteine ligase (518 aa).

This sequence belongs to the glutamate--cysteine ligase type 1 family. Type 1 subfamily.

The catalysed reaction is L-cysteine + L-glutamate + ATP = gamma-L-glutamyl-L-cysteine + ADP + phosphate + H(+). Its pathway is sulfur metabolism; glutathione biosynthesis; glutathione from L-cysteine and L-glutamate: step 1/2. In Klebsiella pneumoniae (strain 342), this protein is Glutamate--cysteine ligase.